A 198-amino-acid polypeptide reads, in one-letter code: Probable molybdenum cofactor guanylyltransferase (198 aa).

GTP-binding positions include 11-13 (LAG), Lys23, Asp71, and Asp102. Asp102 is a Mg(2+) binding site.

This sequence belongs to the MobA family. Requires Mg(2+) as cofactor.

Its subcellular location is the cytoplasm. The catalysed reaction is Mo-molybdopterin + GTP + H(+) = Mo-molybdopterin guanine dinucleotide + diphosphate. Functionally, transfers a GMP moiety from GTP to Mo-molybdopterin (Mo-MPT) cofactor (Moco or molybdenum cofactor) to form Mo-molybdopterin guanine dinucleotide (Mo-MGD) cofactor. The polypeptide is Probable molybdenum cofactor guanylyltransferase (Halalkalibacterium halodurans (strain ATCC BAA-125 / DSM 18197 / FERM 7344 / JCM 9153 / C-125) (Bacillus halodurans)).